The following is a 311-amino-acid chain: L-lactate dehydrogenase 2 (311 aa).

NAD(+) is bound by residues V14, D35, and R40. Residue R90 participates in substrate binding. NAD(+) is bound by residues S103, 120–122 (ATN), and T145. Substrate is bound at residue 122–125 (NPCD). Position 150-153 (150-153 (DTTR)) interacts with substrate. H177 functions as the Proton acceptor in the catalytic mechanism. Residue T230 coordinates substrate.

Belongs to the LDH/MDH superfamily. LDH family. In terms of assembly, homotetramer.

The protein resides in the cytoplasm. It carries out the reaction (S)-lactate + NAD(+) = pyruvate + NADH + H(+). It participates in fermentation; pyruvate fermentation to lactate; (S)-lactate from pyruvate: step 1/1. Functionally, catalyzes the conversion of lactate to pyruvate. This is L-lactate dehydrogenase 2 from Listeria innocua serovar 6a (strain ATCC BAA-680 / CLIP 11262).